The following is a 946-amino-acid chain: Bifunctional glutamine synthetase adenylyltransferase/adenylyl-removing enzyme (946 aa).

Residues 1 to 440 are adenylyl removase; it reads MKPLSSPLQQ…VFNELIGDDE (440 aa). Positions 449-946 are adenylyl transferase; the sequence is SEQWRELWQD…ASWQKWLVEE (498 aa).

Belongs to the GlnE family. The cofactor is Mg(2+).

The enzyme catalyses [glutamine synthetase]-O(4)-(5'-adenylyl)-L-tyrosine + phosphate = [glutamine synthetase]-L-tyrosine + ADP. The catalysed reaction is [glutamine synthetase]-L-tyrosine + ATP = [glutamine synthetase]-O(4)-(5'-adenylyl)-L-tyrosine + diphosphate. In terms of biological role, involved in the regulation of glutamine synthetase GlnA, a key enzyme in the process to assimilate ammonia. When cellular nitrogen levels are high, the C-terminal adenylyl transferase (AT) inactivates GlnA by covalent transfer of an adenylyl group from ATP to specific tyrosine residue of GlnA, thus reducing its activity. Conversely, when nitrogen levels are low, the N-terminal adenylyl removase (AR) activates GlnA by removing the adenylyl group by phosphorolysis, increasing its activity. The regulatory region of GlnE binds the signal transduction protein PII (GlnB) which indicates the nitrogen status of the cell. This Escherichia coli O81 (strain ED1a) protein is Bifunctional glutamine synthetase adenylyltransferase/adenylyl-removing enzyme.